The following is a 56-amino-acid chain: Sec-independent protein translocase protein TatA (56 aa).

Residues 1–21 (MALGPWQIFLILVIILVLFGA) traverse the membrane as a helical segment.

Belongs to the TatA/E family. The Tat system comprises two distinct complexes: a TatABC complex, containing multiple copies of TatA, TatB and TatC subunits, and a separate TatA complex, containing only TatA subunits. Substrates initially bind to the TatABC complex, which probably triggers association of the separate TatA complex to form the active translocon.

Its subcellular location is the cell inner membrane. Functionally, part of the twin-arginine translocation (Tat) system that transports large folded proteins containing a characteristic twin-arginine motif in their signal peptide across membranes. TatA could form the protein-conducting channel of the Tat system. The protein is Sec-independent protein translocase protein TatA of Ehrlichia ruminantium (strain Welgevonden).